Consider the following 312-residue polypeptide: Malate dehydrogenase (312 aa).

Residues 7–13 (GAAGGIG) and D34 contribute to the NAD(+) site. Residues R81 and R87 each contribute to the substrate site. Residues N94 and 117–119 (ITN) contribute to the NAD(+) site. 2 residues coordinate substrate: N119 and R153. H177 functions as the Proton acceptor in the catalytic mechanism. M227 is an NAD(+) binding site.

This sequence belongs to the LDH/MDH superfamily. MDH type 1 family. Homodimer.

The catalysed reaction is (S)-malate + NAD(+) = oxaloacetate + NADH + H(+). Functionally, catalyzes the reversible oxidation of malate to oxaloacetate. This chain is Malate dehydrogenase, found in Salmonella dublin (strain CT_02021853).